A 70-amino-acid polypeptide reads, in one-letter code: Small ribosomal subunit protein bS21 (70 aa).

This sequence belongs to the bacterial ribosomal protein bS21 family.

The protein is Small ribosomal subunit protein bS21 of Wolinella succinogenes (strain ATCC 29543 / DSM 1740 / CCUG 13145 / JCM 31913 / LMG 7466 / NCTC 11488 / FDC 602W) (Vibrio succinogenes).